Consider the following 490-residue polypeptide: ATP synthase subunit beta, chloroplastic (490 aa).

Position 170–177 (170–177 (GGAGVGKT)) interacts with ATP.

Belongs to the ATPase alpha/beta chains family. F-type ATPases have 2 components, CF(1) - the catalytic core - and CF(0) - the membrane proton channel. CF(1) has five subunits: alpha(3), beta(3), gamma(1), delta(1), epsilon(1). CF(0) has four main subunits: a(1), b(1), b'(1) and c(9-12).

It localises to the plastid. The protein localises to the chloroplast thylakoid membrane. It catalyses the reaction ATP + H2O + 4 H(+)(in) = ADP + phosphate + 5 H(+)(out). In terms of biological role, produces ATP from ADP in the presence of a proton gradient across the membrane. The catalytic sites are hosted primarily by the beta subunits. The sequence is that of ATP synthase subunit beta, chloroplastic from Calystegia sepium (Hedge bindweed).